Reading from the N-terminus, the 329-residue chain is Ribonucleoside-diphosphate reductase subunit beta (329 aa).

Fe cation is bound by residues aspartate 66, glutamate 97, and histidine 101. The active site involves tyrosine 105. Fe cation contacts are provided by glutamate 164, glutamate 198, and histidine 201.

It belongs to the ribonucleoside diphosphate reductase small chain family. In terms of assembly, tetramer of two alpha and two beta subunits. Fe cation serves as cofactor.

It carries out the reaction a 2'-deoxyribonucleoside 5'-diphosphate + [thioredoxin]-disulfide + H2O = a ribonucleoside 5'-diphosphate + [thioredoxin]-dithiol. Its function is as follows. Provides the precursors necessary for DNA synthesis. Catalyzes the biosynthesis of deoxyribonucleotides from the corresponding ribonucleotides. The protein is Ribonucleoside-diphosphate reductase subunit beta (nrdF) of Bacillus subtilis (strain 168).